Consider the following 688-residue polypeptide: Lipase (688 aa).

A signal peptide spans 1-35; the sequence is MKTRQNKYSIRKFSVGASSILIAALLFMGGGSAQA. A disordered region spans residues 31–309; it reads GSAQAAEQQQ…KSAKQKQYKN (279 aa). Residues 36–302 constitute a propeptide, removed in mature form; that stretch reads AEQQQDKGTV…KNEDQTNKSA (267 aa). Positions 45 to 54 are enriched in polar residues; that stretch reads VENSTTQSIG. A compositionally biased stretch (low complexity) spans 68-79; that stretch reads NKNVNEKSNVNS. Composition is skewed to basic and acidic residues over residues 84–95, 103–117, and 126–143; these read ESLHNETPKNED, SQND…EQNK, and HSEE…KHAS. The span at 144-172 shows a compositional bias: polar residues; the sequence is ENNQTLHSKAAQSNEDVKTKPSQLDNTAA. A compositionally biased stretch (basic and acidic residues) spans 173–183; sequence KQEDSQKENLS. Residues 184-211 are compositionally biased toward polar residues; that stretch reads KQDTQSSKTTDLLRATAQNQSKDSQSTE. Over residues 240 to 267 the composition is skewed to basic and acidic residues; it reads SKEEPLKVDKQANPTTDKDKSSKNDKGS. Residues 274–289 show a composition bias toward polar residues; sequence LESNAVATTNKQSKQQ. The active-site Nucleophile is Ser-418. Asp-609 acts as the Charge relay system in catalysis. A Ca(2+)-binding site is contributed by Asp-647. His-648 functions as the Charge relay system in the catalytic mechanism. Ca(2+)-binding residues include Asp-650, Asp-655, and Asp-658.

Belongs to the AB hydrolase superfamily. Lipase family.

The protein resides in the secreted. It carries out the reaction a triacylglycerol + H2O = a diacylglycerol + a fatty acid + H(+). The polypeptide is Lipase (lip) (Staphylococcus epidermidis).